The following is a 356-amino-acid chain: Protein-arginine kinase (356 aa).

Residues 24-256 (IIISSRVRVA…RQILAQEQAA (233 aa)) enclose the Phosphagen kinase C-terminal domain. Residues 27–31 (SSRVR), His93, Arg127, 178–182 (RASVM), and 209–214 (RGLYGE) contribute to the ATP site. Residues 339-344 (RDIFRA) carry the RDXXRA motif of the pArg binding pocket involved in allosteric regulation motif.

Belongs to the ATP:guanido phosphotransferase family.

It catalyses the reaction L-arginyl-[protein] + ATP = N(omega)-phospho-L-arginyl-[protein] + ADP + H(+). Appears to be allosterically activated by the binding of pArg-containing polypeptides to the pArg-binding pocket localized in the C-terminal domain of McsB. In terms of biological role, catalyzes the specific phosphorylation of arginine residues in proteins. In Pelotomaculum thermopropionicum (strain DSM 13744 / JCM 10971 / SI), this protein is Protein-arginine kinase.